The chain runs to 129 residues: Serum amyloid A-2 protein (129 aa).

The N-terminal stretch at 1 to 18 (MKLFTGLIFCSLVLGVSS) is a signal peptide. A Pyrrolidone carboxylic acid modification is found at Gln-19. The segment at 92–129 (GDSGHGVEDSKADQAANEWGRSGKDPNHFRPSGLPDKY) is disordered.

Belongs to the SAA family. Apolipoprotein of the HDL complex. Expressed by the liver; secreted in plasma.

The protein resides in the secreted. Its function is as follows. Major acute phase reactant. This Neovison vison (American mink) protein is Serum amyloid A-2 protein (SAA2P0DJI9).